We begin with the raw amino-acid sequence, 238 residues long: SPEG neighbor protein (238 aa).

Residues glutamine 29–arginine 55 enclose the IQ domain. Ig-like domains lie at proline 54–leucine 143 and proline 147–aspartate 236.

This Homo sapiens (Human) protein is SPEG neighbor protein.